A 212-amino-acid polypeptide reads, in one-letter code: SOSS complex subunit B1 (212 aa).

Residues 22-92 (IVLETGRVTK…TLYTGRGGDL (71 aa)) constitute a DNA-binding region (OB). A disordered region spans residues 110 to 212 (EPNPEYNTQQ…GKETRRSSKR (103 aa)). The segment covering 114–130 (EYNTQQAPNKSVQNNDN) has biased composition (polar residues). Thr-117 is subject to Phosphothreonine; by ATM. The span at 131-148 (SPTAPQATTGPPAASPAS) shows a compositional bias: low complexity. Positions 149–160 (ENQNGNGLSTQL) are enriched in polar residues. A compositionally biased stretch (low complexity) spans 166–178 (PHPSHTPSHPPST).

This sequence belongs to the SOSS-B family. SOSS-B1 subfamily. As to quaternary structure, component of the SOSS complex, composed of SOSS-B (SOSS-B1/NABP2 or SOSS-B2/NABP1), SOSS-A/INTS3 and SOSS-C/INIP. SOSS complexes containing SOSS-B1/NABP2 are more abundant than complexes containing SOSS-B2/NABP1. Directly interacts with ATM, SOSS-A/INTS3 and RAD51. Interacts with INTS7. Post-translationally, phosphorylated by ATM in response to DNA damage. Phosphorylation prevents degradation by the proteasome, hence stabilization of the protein and accumulation within cells. In terms of processing, ubiquitinated in a FBXL5-dependent manner, leading to proteasomal degradation.

Its subcellular location is the nucleus. Functionally, component of the SOSS complex, a multiprotein complex that functions downstream of the MRN complex to promote DNA repair and G2/M checkpoint. In the SOSS complex, acts as a sensor of single-stranded DNA that binds to single-stranded DNA, in particular to polypyrimidines. The SOSS complex associates with DNA lesions and influences diverse endpoints in the cellular DNA damage response including cell-cycle checkpoint activation, recombinational repair and maintenance of genomic stability. Required for efficient homologous recombination-dependent repair of double-strand breaks (DSBs) and ATM-dependent signaling pathways. The sequence is that of SOSS complex subunit B1 (Nabp2) from Mus musculus (Mouse).